The chain runs to 914 residues: DNA mismatch repair protein MutS (914 aa).

A disordered region spans residues 1–24 (MDNKTDNKNNLTPQSAPSSAPHKE). The segment covering 8–18 (KNNLTPQSAPS) has biased composition (polar residues). 662-669 (GPNMGGKS) is an ATP binding site.

This sequence belongs to the DNA mismatch repair MutS family.

Functionally, this protein is involved in the repair of mismatches in DNA. It is possible that it carries out the mismatch recognition step. This protein has a weak ATPase activity. The chain is DNA mismatch repair protein MutS from Bartonella henselae (strain ATCC 49882 / DSM 28221 / CCUG 30454 / Houston 1) (Rochalimaea henselae).